The primary structure comprises 518 residues: Xaa-Pro aminopeptidase 3 (518 aa).

A mitochondrion-targeting transit peptide spans 1 to 48; it reads MNNICKLNKFIISKSSSSLSSTSSKIKTNCLIKNAKMFSSSLNLNRFY. 7 residues coordinate substrate: tyrosine 314, aspartate 345, aspartate 356, histidine 434, histidine 441, glutamate 461, and glutamate 485. Mn(2+) contacts are provided by aspartate 345, aspartate 356, and histidine 434. Mn(2+) is bound by residues glutamate 461 and glutamate 485.

The protein belongs to the peptidase M24B family. In terms of assembly, homodimer. Requires Mn(2+) as cofactor.

Its subcellular location is the mitochondrion. The protein resides in the cytoplasm. It catalyses the reaction Release of any N-terminal amino acid, including proline, that is linked to proline, even from a dipeptide or tripeptide.. Its function is as follows. Catalyzes the removal of a penultimate prolyl residue from the N-termini of peptides, such as Leu-Pro-Ala. Also shows low activity towards peptides with Ala or Ser at the P1 position. In Dictyostelium discoideum (Social amoeba), this protein is Xaa-Pro aminopeptidase 3 (xpnpep3).